Consider the following 410-residue polypeptide: Mating-type locus allele B7 protein (410 aa).

The variable domain between B alleles stretch occupies residues 1–110; that stretch reads MSSDPNFSLT…VNVGSPAVGC (110 aa). A DNA-binding region (homeobox; TALE-type) is located at residues 107–184; sequence AVGCRNLSED…NARRRSGWSH (78 aa). The highly conserved between B alleles stretch occupies residues 111–410; that stretch reads RNLSEDLPAY…PFLCLSVAFV (300 aa). 3 disordered regions span residues 202-225, 278-336, and 374-394; these read RAKL…SNNL, TPKP…PELS, and ARGN…QPDE. Positions 276 to 308 match the Nuclear localization signal motif; it reads KKTPKPGMPRPVTTVAKRQPARKTKPAAKPNSR. The segment covering 306–336 has biased composition (polar residues); that stretch reads NSRTANPRASTTPSIDSTLDSSKLESTPELS. Positions 333 to 410 are not essential for B7 function; the sequence is PELSMCSTAD…PFLCLSVAFV (78 aa). Basic residues predominate over residues 375–388; sequence RGNRKVKALPKRAG.

This sequence belongs to the TALE/M-ATYP homeobox family.

Its subcellular location is the nucleus. In terms of biological role, the B locus has at least 25 alleles, and any combination of two different B alleles yields a multimeric regulatory protein, that activates genes responsible for the pathogenicity and for the sexual development of the fungus within the corn plant. This chain is Mating-type locus allele B7 protein, found in Mycosarcoma maydis (Corn smut fungus).